Consider the following 210-residue polypeptide: Imidazoleglycerol-phosphate dehydratase (210 aa).

It belongs to the imidazoleglycerol-phosphate dehydratase family.

It localises to the cytoplasm. The enzyme catalyses D-erythro-1-(imidazol-4-yl)glycerol 3-phosphate = 3-(imidazol-4-yl)-2-oxopropyl phosphate + H2O. It functions in the pathway amino-acid biosynthesis; L-histidine biosynthesis; L-histidine from 5-phospho-alpha-D-ribose 1-diphosphate: step 6/9. This is Imidazoleglycerol-phosphate dehydratase from Acidovorax ebreus (strain TPSY) (Diaphorobacter sp. (strain TPSY)).